Here is a 259-residue protein sequence, read N- to C-terminus: Type III pantothenate kinase (259 aa).

An ATP-binding site is contributed by 6-13 (DVGNTNIV). Residues Tyr-100 and 107–110 (GADR) each bind substrate. The active-site Proton acceptor is Asp-109. Asp-129 provides a ligand contact to K(+). Thr-132 provides a ligand contact to ATP. A substrate-binding site is contributed by Thr-184.

This sequence belongs to the type III pantothenate kinase family. Homodimer. The cofactor is NH4(+). It depends on K(+) as a cofactor.

It localises to the cytoplasm. It catalyses the reaction (R)-pantothenate + ATP = (R)-4'-phosphopantothenate + ADP + H(+). Its pathway is cofactor biosynthesis; coenzyme A biosynthesis; CoA from (R)-pantothenate: step 1/5. Its function is as follows. Catalyzes the phosphorylation of pantothenate (Pan), the first step in CoA biosynthesis. This is Type III pantothenate kinase from Clostridium perfringens (strain 13 / Type A).